The chain runs to 1541 residues: Multiple epidermal growth factor-like domains protein 6 (1541 aa).

The N-terminal stretch at 1 to 30 (MSFLEEARAAGRAVVLALVLLLLPAVPVGA) is a signal peptide. An EMI domain is found at 44-125 (MPHVCAEQEL…QQPDEEGCLS (82 aa)). 15 disulfides stabilise this stretch: C48–C111, C77–C83, C110–C123, C128–C139, C133–C147, C149–C158, C165–C176, C172–C185, C187–C200, C242–C255, C248–C268, C270–C283, C289–C300, C296–C309, and C311–C324. Residues 124–159 (LSAECSASLCFHGGRCVPGSAQPCHCPPGFQGPRCQ) form the EGF-like 1 domain. An EGF-like 2; calcium-binding domain is found at 161-201 (DVDECRTHNGGCQHRCVNTPGSYLCECKPGFRLHTDSRTCL). EGF-like domains lie at 206 to 242 (CALGNGGCQHHCVQLTITRHRCQCRPGFQLQEDGRHC) and 238 to 284 (DGRH…KACE). N252 carries an N-linked (GlcNAc...) asparagine glycan. An EGF-like 5; calcium-binding domain is found at 285-325 (DVDECAAGLAQCAHGCLNTQGSFKCVCHAGYELGADGRQCY). 2 consecutive EGF-like domains span residues 335 to 370 (CEANNGGCSHGCSHTSAGPLCTCPRGYELDTDQRTC) and 375 to 411 (DCADSPCCQQVCTNNPGGYECGCYAGYRLSADGCGCE). Residues 412 to 452 (DVDECASSRGGCEHHCTNLAGSFQCSCEAGYRLHEDRRGCS) form the EGF-like 8; calcium-binding domain. 12 disulfide bridges follow: C416-C427, C423-C436, C438-C451, C520-C533, C527-C540, C542-C551, C564-C576, C570-C583, C585-C594, C607-C619, C613-C626, and C628-C637. 19 consecutive EGF-like domains span residues 516 to 552 (FGHDCSLTCDDCRNGGTCLLGLDGCDCPEGWTGLICN), 560 to 595 (FGKNCSFSCSCQNGGTCDSVTGACRCPPGVSGTNCE), 603 to 638 (YGKHCRKKCNCANRGRCHRLYGACLCDPGLYGRFCH), 736 to 770 (FGVNCSSSCSCGGAPCHGVTGQCRCPPGRTGEDCE), 783 to 814 (QEICPACQHAARCDPETGACLCLPGFVGSRCQ), 822 to 857 (YGPSCQTRCSCANDGHCHPATGHCSCAPGWTGFSCQ), 865 to 901 (WGPDCSHPCNCSAGHGSCDAISGLCLCEAGYVGPRCE), 909 to 944 (FGPGCEQRCQCQHGAACDHVSGACTCPAGWRGTFCE), 955 to 987 (DCRSACNCTAGAACDAVNGSCLCPAGRRGPRCA), 995 to 1030 (YGHNCSQACACFNGASCDPVHGQCHCAPGWMGPSCL), 1038 to 1073 (YGDNCRHSCLCQNGGTCDPVSGHCACPEGWAGLACE), 1081 to 1116 (VRAGCRHSGGCLNGGLCDPHTGRCLCPAGWTGDKCQ), 1124 to 1159 (FGEACAQRCSCPPGAACHHVTGACRCPPGFTGSGCE), 1211 to 1246 (YGPGCEQLCGCLNGGSCDAATGACRCPTGFLGTDCN), 1254 to 1289 (FGPNCTHVCGCGQGAACDPVTGTCLCPPGRAGVRCE), 1297 to 1332 (FGVGCEHTCSCRNGGLCHASNGSCSCGLGWTGRHCE), 1345 to 1375 (HLECSCHNNSTCEPATGTCRCGPGFYGQACE), 1383 to 1418 (HGAGCQGLCWCQHGAPCDPISGRCLCPAGFHGHFCE), and 1469 to 1504 (FGPSCTLHCDCGGGADCDPVSGQCHCVDGYMGPTCR). N739 carries an N-linked (GlcNAc...) asparagine glycan. 15 cysteine pairs are disulfide-bonded: C740/C751, C744/C758, C760/C769, C786/C795, C789/C802, C804/C813, C826/C838, C832/C845, C847/C856, C869/C882, C873/C889, C891/C900, C913/C925, C919/C932, and C934/C943. 30 cysteine pairs are disulfide-bonded: C999–C1011, C1005–C1018, C1020–C1029, C1042–C1054, C1048–C1061, C1063–C1072, C1085–C1097, C1091–C1104, C1106–C1115, C1128–C1140, C1134–C1147, C1149–C1158, C1215–C1227, C1221–C1234, C1236–C1245, C1258–C1270, C1264–C1277, C1279–C1288, C1301–C1313, C1307–C1320, C1322–C1331, C1348–C1356, C1350–C1363, C1365–C1374, C1387–C1399, C1393–C1406, C1408–C1417, C1473–C1485, C1479–C1492, and C1494–C1503. Residues 1509 to 1541 (LRLPENPSLAQGSAGTLPASSRPTSRSGGPARH) are disordered. The span at 1516-1535 (SLAQGSAGTLPASSRPTSRS) shows a compositional bias: polar residues.

The protein resides in the secreted. This is Multiple epidermal growth factor-like domains protein 6 (MEGF6) from Homo sapiens (Human).